We begin with the raw amino-acid sequence, 368 residues long: Ethanol acetyltransferase 1 (368 aa).

The transit peptide at 1–21 directs the protein to the mitochondrion; that stretch reads MFLSLRPSLSVSRLAVVRRAY. Residues 67–171 form the AB hydrolase-1 domain; it reads PIIFFHGLLG…IIDNAPEPQP (105 aa). Residues Ser140, Asp164, and His315 each act as charge relay system in the active site. The disordered stretch occupies residues 344 to 368; that stretch reads RNKDPNNYMQTQNSISNSDTMGQSL. Residues 348–368 show a composition bias toward polar residues; the sequence is PNNYMQTQNSISNSDTMGQSL.

It belongs to the AB hydrolase superfamily.

It localises to the mitochondrion. It catalyses the reaction ethanol + acetyl-CoA = ethyl acetate + CoA. The catalysed reaction is acetyl-CoA + H2O = acetate + CoA + H(+). It carries out the reaction ethyl acetate + H2O = ethanol + acetate + H(+). Alcohol acetyltransferase that catalyzes the synthesis of ethyl acetate from ethanol and acetyl-CoA. Can also function as a thioesterase by hydrolyzing acetyl-CoA in the absence of ethanol, as well as esterase hydrolyzing ethyl acetate. The polypeptide is Ethanol acetyltransferase 1 (EAT1) (Kluyveromyces lactis (strain ATCC 8585 / CBS 2359 / DSM 70799 / NBRC 1267 / NRRL Y-1140 / WM37) (Yeast)).